The sequence spans 291 residues: 4-hydroxy-tetrahydrodipicolinate synthase (291 aa).

A pyruvate-binding site is contributed by T45. The Proton donor/acceptor role is filled by Y133. The active-site Schiff-base intermediate with substrate is the K161. I203 lines the pyruvate pocket.

This sequence belongs to the DapA family. As to quaternary structure, homotetramer; dimer of dimers.

It localises to the cytoplasm. It catalyses the reaction L-aspartate 4-semialdehyde + pyruvate = (2S,4S)-4-hydroxy-2,3,4,5-tetrahydrodipicolinate + H2O + H(+). The protein operates within amino-acid biosynthesis; L-lysine biosynthesis via DAP pathway; (S)-tetrahydrodipicolinate from L-aspartate: step 3/4. Functionally, catalyzes the condensation of (S)-aspartate-beta-semialdehyde [(S)-ASA] and pyruvate to 4-hydroxy-tetrahydrodipicolinate (HTPA). This Neisseria meningitidis serogroup C (strain 053442) protein is 4-hydroxy-tetrahydrodipicolinate synthase.